Here is a 366-residue protein sequence, read N- to C-terminus: Ribosomal RNA large subunit methyltransferase M (366 aa).

Residues Ser-188, 221 to 224 (CPGG), Asp-240, Asp-260, and Asp-277 contribute to the S-adenosyl-L-methionine site. Lys-306 (proton acceptor) is an active-site residue.

This sequence belongs to the class I-like SAM-binding methyltransferase superfamily. RNA methyltransferase RlmE family. RlmM subfamily. As to quaternary structure, monomer.

The protein localises to the cytoplasm. The catalysed reaction is cytidine(2498) in 23S rRNA + S-adenosyl-L-methionine = 2'-O-methylcytidine(2498) in 23S rRNA + S-adenosyl-L-homocysteine + H(+). In terms of biological role, catalyzes the 2'-O-methylation at nucleotide C2498 in 23S rRNA. This Salmonella dublin (strain CT_02021853) protein is Ribosomal RNA large subunit methyltransferase M.